Reading from the N-terminus, the 418-residue chain is Protein SSXT (418 aa).

The residue at position 2 (serine 2) is an N-acetylserine. Residues serine 2–proline 186 are transcriptional activation. Positions tyrosine 50 to methionine 53 match the SH2-binding motif. Disordered stretches follow at residues alanine 77–histidine 118 and glycine 188–glutamine 418. Positions tyrosine 225 to proline 251 are enriched in low complexity. Residues glycine 309 to serine 318 show a composition bias toward basic and acidic residues. Low complexity-rich tracts occupy residues glutamine 328–glutamine 337, tyrosine 345–glycine 366, and tyrosine 376–threonine 393. 2 tandem repeats follow at residues glycine 344 to glutamine 356 and glycine 357 to glutamine 369. Residues glycine 344 to glutamine 369 form a 2 X 13 AA imperfect tandem repeats region. An SH2-binding motif is present at residues proline 374–proline 377. The SH3-binding signature appears at proline 392–proline 401. The segment covering glutamine 394 to glutamine 403 has biased composition (pro residues). Low complexity predominate over residues arginine 404–glutamine 418. An SH2-binding motif is present at residues tyrosine 413–tyrosine 416.

This sequence belongs to the SS18 family. In terms of assembly, interacts with MLLT10. Isoform 1 interacts with RBM14 isoform 1. Isoform 2 interacts with RBM14 isoform 1. Component of the multiprotein chromatin-remodeling complexes SWI/SNF: SWI/SNF-A (BAF), SWI/SNF-B (PBAF) and related complexes. The canonical complex contains a catalytic subunit (either SMARCA4/BRG1/BAF190A or SMARCA2/BRM/BAF190B) and at least SMARCE1, ACTL6A/BAF53, SMARCC1/BAF155, SMARCC2/BAF170, and SMARCB1/SNF5/BAF47. Other subunits specific to each of the complexes may also be present permitting several possible combinations developmentally and tissue specific. Component of the SWI/SNF (GBAF) subcomplex, which includes at least BICRA or BICRAL (mutually exclusive), BRD9, SS18, the core BAF subunits, SMARCA2/BRM, SMARCA4/BRG1/BAF190A, ACTL6A/BAF53, SMARCC1/BAF155, and SMARCD1/BAF60A. As to expression, fairly ubiquitously expressed. Expressed in synovial sarcomas and in other human cell lines. The fusion genes SSXT-SSX1 and SSXT-SSX2 are expressed only in synovial sarcomas.

It localises to the nucleus. In terms of biological role, appears to function synergistically with RBM14 as a transcriptional coactivator. Isoform 1 and isoform 2 function in nuclear receptor coactivation. Isoform 1 and isoform 2 function in general transcriptional coactivation. Component of SWI/SNF chromatin remodeling subcomplex GBAF that carries out key enzymatic activities, changing chromatin structure by altering DNA-histone contacts within a nucleosome in an ATP-dependent manner. This is Protein SSXT (SS18) from Homo sapiens (Human).